We begin with the raw amino-acid sequence, 84 residues long: Phosphoribosylformylglycinamidine synthase subunit PurS (84 aa).

It belongs to the PurS family. In terms of assembly, homodimer. Part of the FGAM synthase complex composed of 1 PurL, 1 PurQ and 2 PurS subunits.

The protein resides in the cytoplasm. It carries out the reaction N(2)-formyl-N(1)-(5-phospho-beta-D-ribosyl)glycinamide + L-glutamine + ATP + H2O = 2-formamido-N(1)-(5-O-phospho-beta-D-ribosyl)acetamidine + L-glutamate + ADP + phosphate + H(+). The protein operates within purine metabolism; IMP biosynthesis via de novo pathway; 5-amino-1-(5-phospho-D-ribosyl)imidazole from N(2)-formyl-N(1)-(5-phospho-D-ribosyl)glycinamide: step 1/2. Functionally, part of the phosphoribosylformylglycinamidine synthase complex involved in the purines biosynthetic pathway. Catalyzes the ATP-dependent conversion of formylglycinamide ribonucleotide (FGAR) and glutamine to yield formylglycinamidine ribonucleotide (FGAM) and glutamate. The FGAM synthase complex is composed of three subunits. PurQ produces an ammonia molecule by converting glutamine to glutamate. PurL transfers the ammonia molecule to FGAR to form FGAM in an ATP-dependent manner. PurS interacts with PurQ and PurL and is thought to assist in the transfer of the ammonia molecule from PurQ to PurL. The sequence is that of Phosphoribosylformylglycinamidine synthase subunit PurS from Methanothermobacter thermautotrophicus (strain ATCC 29096 / DSM 1053 / JCM 10044 / NBRC 100330 / Delta H) (Methanobacterium thermoautotrophicum).